Reading from the N-terminus, the 168-residue chain is Shikimate kinase (168 aa).

Residue 11-16 (GAGKTT) coordinates ATP. Threonine 15 contacts Mg(2+). Residues aspartate 33, arginine 57, and glycine 78 each contribute to the substrate site. Residue arginine 118 participates in ATP binding. Residue arginine 136 participates in substrate binding. Arginine 153 contributes to the ATP binding site.

It belongs to the shikimate kinase family. As to quaternary structure, monomer. Mg(2+) is required as a cofactor.

The protein resides in the cytoplasm. It catalyses the reaction shikimate + ATP = 3-phosphoshikimate + ADP + H(+). It functions in the pathway metabolic intermediate biosynthesis; chorismate biosynthesis; chorismate from D-erythrose 4-phosphate and phosphoenolpyruvate: step 5/7. Catalyzes the specific phosphorylation of the 3-hydroxyl group of shikimic acid using ATP as a cosubstrate. The polypeptide is Shikimate kinase (Enterococcus faecalis (strain ATCC 700802 / V583)).